The following is a 205-amino-acid chain: Thiamine-phosphate synthase (205 aa).

Residues 34-38 (QLRCK) and N66 contribute to the 4-amino-2-methyl-5-(diphosphooxymethyl)pyrimidine site. D67 and D86 together coordinate Mg(2+). S105 is a binding site for 4-amino-2-methyl-5-(diphosphooxymethyl)pyrimidine. 131–133 (TTT) lines the 2-[(2R,5Z)-2-carboxy-4-methylthiazol-5(2H)-ylidene]ethyl phosphate pocket. Position 134 (K134) interacts with 4-amino-2-methyl-5-(diphosphooxymethyl)pyrimidine. G163 is a 2-[(2R,5Z)-2-carboxy-4-methylthiazol-5(2H)-ylidene]ethyl phosphate binding site.

Belongs to the thiamine-phosphate synthase family. Mg(2+) serves as cofactor.

It catalyses the reaction 2-[(2R,5Z)-2-carboxy-4-methylthiazol-5(2H)-ylidene]ethyl phosphate + 4-amino-2-methyl-5-(diphosphooxymethyl)pyrimidine + 2 H(+) = thiamine phosphate + CO2 + diphosphate. The enzyme catalyses 2-(2-carboxy-4-methylthiazol-5-yl)ethyl phosphate + 4-amino-2-methyl-5-(diphosphooxymethyl)pyrimidine + 2 H(+) = thiamine phosphate + CO2 + diphosphate. The catalysed reaction is 4-methyl-5-(2-phosphooxyethyl)-thiazole + 4-amino-2-methyl-5-(diphosphooxymethyl)pyrimidine + H(+) = thiamine phosphate + diphosphate. It functions in the pathway cofactor biosynthesis; thiamine diphosphate biosynthesis; thiamine phosphate from 4-amino-2-methyl-5-diphosphomethylpyrimidine and 4-methyl-5-(2-phosphoethyl)-thiazole: step 1/1. Functionally, condenses 4-methyl-5-(beta-hydroxyethyl)thiazole monophosphate (THZ-P) and 2-methyl-4-amino-5-hydroxymethyl pyrimidine pyrophosphate (HMP-PP) to form thiamine monophosphate (TMP). The polypeptide is Thiamine-phosphate synthase (Neisseria gonorrhoeae (strain ATCC 700825 / FA 1090)).